The primary structure comprises 130 residues: Phosphoribosyl-AMP cyclohydrolase (130 aa).

Position 80 (aspartate 80) interacts with Mg(2+). Cysteine 81 contacts Zn(2+). Mg(2+) contacts are provided by aspartate 82 and aspartate 84. Zn(2+)-binding residues include cysteine 98 and cysteine 105.

The protein belongs to the PRA-CH family. As to quaternary structure, homodimer. The cofactor is Mg(2+). Zn(2+) is required as a cofactor.

The protein localises to the cytoplasm. It catalyses the reaction 1-(5-phospho-beta-D-ribosyl)-5'-AMP + H2O = 1-(5-phospho-beta-D-ribosyl)-5-[(5-phospho-beta-D-ribosylamino)methylideneamino]imidazole-4-carboxamide. It participates in amino-acid biosynthesis; L-histidine biosynthesis; L-histidine from 5-phospho-alpha-D-ribose 1-diphosphate: step 3/9. Functionally, catalyzes the hydrolysis of the adenine ring of phosphoribosyl-AMP. The sequence is that of Phosphoribosyl-AMP cyclohydrolase from Oleidesulfovibrio alaskensis (strain ATCC BAA-1058 / DSM 17464 / G20) (Desulfovibrio alaskensis).